The following is a 125-amino-acid chain: Large ribosomal subunit protein eL31 (125 aa).

Met-1 bears the N-acetylmethionine mark. Position 15 is a phosphoserine (Ser-15). Residues Lys-55 and Lys-70 each carry the N6-succinyllysine modification. Residue Lys-75 is modified to N6-acetyllysine; alternate. Lys-75 is subject to N6-succinyllysine; alternate. Ser-98 is subject to Phosphoserine.

It belongs to the eukaryotic ribosomal protein eL31 family. As to quaternary structure, component of the large ribosomal subunit.

Its subcellular location is the cytoplasm. Component of the large ribosomal subunit. The ribosome is a large ribonucleoprotein complex responsible for the synthesis of proteins in the cell. The chain is Large ribosomal subunit protein eL31 (RPL31) from Oryctolagus cuniculus (Rabbit).